Reading from the N-terminus, the 286-residue chain is Master replication protein (286 aa).

One can recognise a CRESS-DNA virus Rep endonuclease domain in the interval 2–96; the sequence is ARQVICWCFT…LEGPWEYGEF (95 aa). Positions 9–12 match the RCR-1 motif; it reads CFTL. 2 residues coordinate a divalent metal cation: Glu33 and His41. An RCR-2 motif is present at residues 41–43; the sequence is HFQ. A Nuclear localization signal motif is present at residues 50–70; sequence KRTSLAGMKKLIPGAHFEKRR. Tyr79 acts as the For DNA cleavage activity in catalysis. Positions 79-82 match the RCR-3 motif; sequence YSMK. A divalent metal cation is bound at residue Asp84. The Nuclear localization signal motif lies at 96–102; that stretch reads FVPTIED. Position 186–188 (186–188) interacts with ATP; that stretch reads GKT.

This sequence belongs to the nanoviridea/circoviridae replication-associated protein family. As to quaternary structure, homooligomer (Potential). Rep binds to repeated DNA motifs (iterons). Mg(2+) is required as a cofactor. Mn(2+) serves as cofactor.

It localises to the host nucleus. The enzyme catalyses ATP + H2O = ADP + phosphate + H(+). Essential for the replication of all genomic viral ssDNA (trans-replication). The closed circular ssDNA genome is first converted to a superhelical dsDNA. Rep binds a specific hairpin at the genome origin of replication. Introduces an endonucleolytic nick within the conserved sequence 5'-A[GT]TATTAC-3' in the intergenic region of the genome, thereby initiating the rolling circle replication (RCR). Following cleavage, binds covalently to the 5'-phosphate of DNA as a tyrosyl ester. The cleavage gives rise to a free 3'-OH that serves as a primer for the cellular DNA polymerase. The polymerase synthesizes the (+) strand DNA by rolling circle mechanism. After one round of replication, a Rep-catalyzed nucleotidyl transfer reaction releases a circular single-stranded virus genome, thereby terminating the replication. Displays origin-specific DNA cleavage, nucleotidyl transferase, ATPase and helicase activities. The protein is Master replication protein (DNA-R) of Cicer arietinum (Chickpea).